The chain runs to 129 residues: Small ribosomal subunit protein uS12 (129 aa).

The disordered stretch occupies residues 1 to 25 (MPTYNQLVRFGRKSKTRKTKSPALE). Residues 10-20 (FGRKSKTRKTK) show a composition bias toward basic residues. Asp-89 is modified (3-methylthioaspartic acid). Positions 110–129 (RKQGRSRYGAPSKQVAVTKK) are disordered.

This sequence belongs to the universal ribosomal protein uS12 family. In terms of assembly, part of the 30S ribosomal subunit. Contacts proteins S8 and S17. May interact with IF1 in the 30S initiation complex.

In terms of biological role, with S4 and S5 plays an important role in translational accuracy. Interacts with and stabilizes bases of the 16S rRNA that are involved in tRNA selection in the A site and with the mRNA backbone. Located at the interface of the 30S and 50S subunits, it traverses the body of the 30S subunit contacting proteins on the other side and probably holding the rRNA structure together. The combined cluster of proteins S8, S12 and S17 appears to hold together the shoulder and platform of the 30S subunit. The sequence is that of Small ribosomal subunit protein uS12 from Rickettsia canadensis (strain McKiel).